The primary structure comprises 296 residues: Ribosomal RNA small subunit methyltransferase H (296 aa).

S-adenosyl-L-methionine is bound by residues 41-43 (GGH), Asp60, Phe87, Asp103, and Gln110.

This sequence belongs to the methyltransferase superfamily. RsmH family.

It localises to the cytoplasm. It catalyses the reaction cytidine(1402) in 16S rRNA + S-adenosyl-L-methionine = N(4)-methylcytidine(1402) in 16S rRNA + S-adenosyl-L-homocysteine + H(+). Specifically methylates the N4 position of cytidine in position 1402 (C1402) of 16S rRNA. The chain is Ribosomal RNA small subunit methyltransferase H from Synechococcus elongatus (strain ATCC 33912 / PCC 7942 / FACHB-805) (Anacystis nidulans R2).